The sequence spans 1462 residues: MFRGPKPPIAPKPRLTAPNEWRASVYLNDSLNKCSNGRLPCVDRGLDEGPRSIPKCSESETDEDYIVVPRVPLREDEPKDEGSVGNKALVSPESSAEEEEEREEGGEACGLEGTGAGEDSVAPAAPGAGALSREGEEGTDLALEDEGEGCADEPGTLEQVSRSEEEEKLVQPHRECSLEDSGPWAGEGVFQSDLLLPHIHGEDQEPPDTPGEAEEDDEEGCASTDPAGADEGSGPDRPTEDMGQDAEDTSEEPPEKEELAGVQEAETATDCPEVLEEGCEEATGVTGGEQVDLSEPPDHEKKTNQEVAAATLEDHAQDESAEESCQIVPFENDCMEDFVTSLTGSPYEFFPTESTSFCSESCSPLSESAKGLESEQAPKLGLRAEENPMVGALCGQCGSLQGGAAEGPAAPDVVVVLEEEALDDALANPYVMGVGLPGQAAPGEGGQAASDALGGYGSKEELNCEAEGGLVPADRKNTSTRVRPHSGKVAGYVPETVPEETGPEAGSSAPGIGGAAEEVGKTLLSLEGKPLEASRALPAKPRAFTLYPRSFSVEGREIPVSVYQEPEGSGLDDHRIKRKEDNLSLSCVIGSSGSFSQRNHLPSSGTSTPSSMVDIPPPFDLACITKKPITKSSPSLLIESDSPDKYKKKKSSFKRFLALTFKKKTENKLHVDVNVSSSRSSSESSYHGPSRILEVDRRSLSNSPQLKSRTGKLRASESPSSLIFYRDGKRKGVPFSRTVSRVESFEDRSRPPFLPLPLTKPRSISFPSADTSDYENIPAMNSDYENIQIPPRRPARAGAFTKLFEDQSRALSTANENDGYVDMSSFNAFESKQQSADQDAESAYTEPYKVCPISSAAPKEDLTSDEEQRSSEEEDSASRDPSVTHKVEGQSRALVIAQELLSSEKAYVEMLQHLNLDFHGAVMRALDDMDHEGRDTLAREELRQGLSELPAIHDLHQGILEELEERLSNWESQQKVADVFLAREQGFDHHATHILQFDRYLGLLSENCLHSPRLAAAVREFEQSVQGGSQTAKHRLLRVVQRLFQYQVLLTDYLNNLCPDSAEYDNTQGALSLISKVTDRANDSMEQGENLQKLVHIEHSVRGQGDLLQPGREFLKEGTLMKVTGKNRRPRHLFLMNDVLLYTYPQKDGKYRLKNTLAVANMKVSRPVMEKVPYALKIETSESCLMLSASSCAERDEWYGCLSRALPEDYKAQALAAFHHSVEIRERLGVSLGERPPTLVPVTHVMMCMNCGCDFSLTLRRHHCHACGKIVCRNCSRNKYPLKYLKDRMAKVCDGCFGELKKRGRAVPGLMRERPVSMSFPLSSPRFSGSAFSSVFQSINPSTFKKQKKVPSALTEVAASGEGSAISGYLSRCKRGKRHWKKLWFVIKGKVLYTYMASEDKVALESMPLLGFTIAPEKEEGSSEVGPIFHLYHKKTLFYSFKAEDTNSAQRWIEAMEDASVL.

Disordered stretches follow at residues 37–323 (GRLP…SAEE), 492–512 (YVPE…APGI), 592–613 (SGSF…SSMV), 670–718 (HVDV…ASES), 746–777 (EDRS…YENI), and 851–887 (CPIS…THKV). The segment covering 72–82 (PLREDEPKDEG) has biased composition (basic and acidic residues). Acidic residues-rich tracts occupy residues 95 to 106 (SAEEEEEREEGG) and 137 to 151 (EGTD…EGCA). Residues 161–177 (SRSEEEEKLVQPHRECS) are compositionally biased toward basic and acidic residues. Acidic residues-rich tracts occupy residues 211–220 (GEAEEDDEEG) and 242–255 (MGQD…EPPE). The span at 592–611 (SGSFSQRNHLPSSGTSTPSS) shows a compositional bias: polar residues. The span at 676-685 (SSSRSSSESS) shows a compositional bias: low complexity. Basic and acidic residues predominate over residues 858-887 (PKEDLTSDEEQRSSEEEDSASRDPSVTHKV). The 193-residue stretch at 892 to 1084 (RALVIAQELL…SKVTDRANDS (193 aa)) folds into the DH domain. A PH 1 domain is found at 1113–1207 (EFLKEGTLMK…WYGCLSRALP (95 aa)). The FYVE-type zinc finger occupies 1242–1301 (VTHVMMCMNCGCDFSLTLRRHHCHACGKIVCRNCSRNKYPLKYLKDRMAKVCDGCFGELK). Zn(2+) contacts are provided by C1248, C1251, C1264, C1267, C1272, C1275, C1293, and C1296. Residues 1363-1461 (GSAISGYLSR…WIEAMEDASV (99 aa)) form the PH 2 domain.

Expressed in endothelial cells (at protein level).

It is found in the cytoplasm. The protein localises to the cytoskeleton. The protein resides in the cell projection. It localises to the ruffle membrane. Its subcellular location is the endoplasmic reticulum. It is found in the golgi apparatus. The protein localises to the early endosome. In terms of biological role, activates CDC42, a member of the Ras-like family of Rho- and Rac proteins, by exchanging bound GDP for free GTP. Mediates VEGF-induced CDC42 activation. May regulate proangiogenic action of VEGF in vascular endothelial cells, including network formation, directional movement and proliferation. May play a role in regulating the actin cytoskeleton and cell shape. The chain is FYVE, RhoGEF and PH domain-containing protein 5 (FGD5) from Homo sapiens (Human).